The chain runs to 295 residues: Small ribosomal subunit protein uS2 (295 aa).

The segment at Lys264–Ala295 is disordered.

This sequence belongs to the universal ribosomal protein uS2 family.

This Rickettsia akari (strain Hartford) protein is Small ribosomal subunit protein uS2.